The sequence spans 180 residues: Acireductone dioxygenase (180 aa).

Residues His97, His99, Glu103, and His141 each contribute to the Fe(2+) site. Ni(2+) contacts are provided by His97, His99, Glu103, and His141.

This sequence belongs to the acireductone dioxygenase (ARD) family. As to quaternary structure, monomer. Fe(2+) serves as cofactor. Ni(2+) is required as a cofactor.

It catalyses the reaction 1,2-dihydroxy-5-(methylsulfanyl)pent-1-en-3-one + O2 = 3-(methylsulfanyl)propanoate + CO + formate + 2 H(+). It carries out the reaction 1,2-dihydroxy-5-(methylsulfanyl)pent-1-en-3-one + O2 = 4-methylsulfanyl-2-oxobutanoate + formate + 2 H(+). It participates in amino-acid biosynthesis; L-methionine biosynthesis via salvage pathway; L-methionine from S-methyl-5-thio-alpha-D-ribose 1-phosphate: step 5/6. In terms of biological role, catalyzes 2 different reactions between oxygen and the acireductone 1,2-dihydroxy-3-keto-5-methylthiopentene (DHK-MTPene) depending upon the metal bound in the active site. Fe-containing acireductone dioxygenase (Fe-ARD) produces formate and 2-keto-4-methylthiobutyrate (KMTB), the alpha-ketoacid precursor of methionine in the methionine recycle pathway. Ni-containing acireductone dioxygenase (Ni-ARD) produces methylthiopropionate, carbon monoxide and formate, and does not lie on the methionine recycle pathway. The sequence is that of Acireductone dioxygenase from Klebsiella pneumoniae subsp. pneumoniae (strain ATCC 700721 / MGH 78578).